Here is a 411-residue protein sequence, read N- to C-terminus: Na(+)-translocating NADH-quinone reductase subunit B (411 aa).

Helical transmembrane passes span 56–76 (IMIT…YNAG), 121–141 (FLPI…LFAV), and 161–181 (ILPA…GVVI). Thr-228 is modified (FMN phosphoryl threonine). 5 consecutive transmembrane segments (helical) span residues 254-274 (FIPG…AAVL), 284-304 (IMLG…AIGS), 309-329 (MFGM…GMVF), 345-365 (LLFG…NPAF), and 368-388 (GIML…HFFV).

It belongs to the NqrB/RnfD family. Composed of six subunits; NqrA, NqrB, NqrC, NqrD, NqrE and NqrF. It depends on FMN as a cofactor.

The protein localises to the cell inner membrane. It catalyses the reaction a ubiquinone + n Na(+)(in) + NADH + H(+) = a ubiquinol + n Na(+)(out) + NAD(+). Functionally, NQR complex catalyzes the reduction of ubiquinone-1 to ubiquinol by two successive reactions, coupled with the transport of Na(+) ions from the cytoplasm to the periplasm. NqrA to NqrE are probably involved in the second step, the conversion of ubisemiquinone to ubiquinol. This is Na(+)-translocating NADH-quinone reductase subunit B from Chromohalobacter salexigens (strain ATCC BAA-138 / DSM 3043 / CIP 106854 / NCIMB 13768 / 1H11).